The following is a 511-amino-acid chain: Rab proteins geranylgeranyltransferase component A (511 aa).

Belongs to the Rab GDI family.

The protein resides in the cytoplasm. The protein localises to the perinuclear region. Its subcellular location is the cytoskeleton. It localises to the spindle pole. Functionally, binds unprenylated Rab proteins, presents it to the catalytic component B, and remains bound to it after the geranylgeranyl transfer reaction. The component A is thought to be regenerated by transferring its prenylated Rab to a protein acceptor. This Drosophila melanogaster (Fruit fly) protein is Rab proteins geranylgeranyltransferase component A.